The following is a 441-amino-acid chain: Arginine biosynthesis bifunctional protein ArgJ, mitochondrial (441 aa).

Threonine 177, lysine 203, threonine 214, glutamate 303, asparagine 436, and serine 441 together coordinate substrate. The active-site Nucleophile is threonine 214.

It belongs to the ArgJ family. Heterodimer of an alpha and a beta chain. Post-translationally, the alpha and beta chains are autoproteolytically processed from a single precursor protein within the mitochondrion.

The protein localises to the mitochondrion matrix. It carries out the reaction N(2)-acetyl-L-ornithine + L-glutamate = N-acetyl-L-glutamate + L-ornithine. The catalysed reaction is L-glutamate + acetyl-CoA = N-acetyl-L-glutamate + CoA + H(+). It participates in amino-acid biosynthesis; L-arginine biosynthesis; L-ornithine and N-acetyl-L-glutamate from L-glutamate and N(2)-acetyl-L-ornithine (cyclic): step 1/1. The protein operates within amino-acid biosynthesis; L-arginine biosynthesis; N(2)-acetyl-L-ornithine from L-glutamate: step 1/4. Its function is as follows. Catalyzes two activities which are involved in the cyclic version of arginine biosynthesis: the synthesis of acetylglutamate from glutamate and acetyl-CoA, and of ornithine by transacetylation between acetylornithine and glutamate. This is Arginine biosynthesis bifunctional protein ArgJ, mitochondrial from Debaryomyces hansenii (strain ATCC 36239 / CBS 767 / BCRC 21394 / JCM 1990 / NBRC 0083 / IGC 2968) (Yeast).